Here is a 187-residue protein sequence, read N- to C-terminus: Nodulin-related protein 1 (187 aa).

N-acetylmethionine is present on M1. Disordered stretches follow at residues 1 to 66 and 132 to 176; these read MDFF…ATNA and YETS…HGFG. Residues 7–48 are compositionally biased toward basic and acidic residues; it reads QVKKKFSDKKPESSDPEPNHNKNKPGHTEPTTHKPGHGEPTT. The span at 142 to 158 shows a compositional bias: gly residues; sequence GGTGSHGNVGGHGGGAG.

In terms of assembly, interacts with RPS2. As to expression, expressed in roots, leaves, flowers and siliques.

Its function is as follows. Prevents accumulation of abscisic acid (ABA) after heat treatment, thus reducing thermotolerance. May be a negative regulator of the ABA signaling/synthesis pathway. Required for defense responses against avirulent bacteria such as P.syringae pv. tomato DC3000 (avrRpt2). In Arabidopsis thaliana (Mouse-ear cress), this protein is Nodulin-related protein 1.